The primary structure comprises 274 residues: MTKKLINQFKSFQVHPYHLVEPSPWPLGASVACLILTLGGVMKFHGFAAGDIGLPLGLILVLASMLLWWRDVIREATYQGHHTKTVKYGITLGVVLFIVSEILLFFSLFWAFFHSSLAPSVELGSTWPPVGIEPLNPFEVPLLNTIILLTSGCTITVSHAKIISGDRGATILYLILTILLAWMFLGLQWVEYVNAPFTIADSVYGSTFFVATGFHGLHVMIGTIFLTVSLNRILSYHLTSGHHLGYEAAIWYWHVVDVIWLFLYVSVYYWGSNV.

The next 7 membrane-spanning stretches (helical) occupy residues proline 22–methionine 42, phenylalanine 47–leucine 67, glycine 93–phenylalanine 113, proline 137–valine 157, threonine 170–valine 190, phenylalanine 208–valine 228, and alanine 248–tyrosine 268.

Belongs to the cytochrome c oxidase subunit 3 family. As to quaternary structure, component of the cytochrome c oxidase (complex IV, CIV), a multisubunit enzyme composed of a catalytic core of 3 subunits and several supernumerary subunits. The complex exists as a monomer or a dimer and forms supercomplexes (SCs) in the inner mitochondrial membrane with ubiquinol-cytochrome c oxidoreductase (cytochrome b-c1 complex, complex III, CIII).

The protein resides in the mitochondrion inner membrane. The catalysed reaction is 4 Fe(II)-[cytochrome c] + O2 + 8 H(+)(in) = 4 Fe(III)-[cytochrome c] + 2 H2O + 4 H(+)(out). Component of the cytochrome c oxidase, the last enzyme in the mitochondrial electron transport chain which drives oxidative phosphorylation. The respiratory chain contains 3 multisubunit complexes succinate dehydrogenase (complex II, CII), ubiquinol-cytochrome c oxidoreductase (cytochrome b-c1 complex, complex III, CIII) and cytochrome c oxidase (complex IV, CIV), that cooperate to transfer electrons derived from NADH and succinate to molecular oxygen, creating an electrochemical gradient over the inner membrane that drives transmembrane transport and the ATP synthase. Cytochrome c oxidase is the component of the respiratory chain that catalyzes the reduction of oxygen to water. Electrons originating from reduced cytochrome c in the intermembrane space (IMS) are transferred via the dinuclear copper A center (CU(A)) of subunit 2 and heme A of subunit 1 to the active site in subunit 1, a binuclear center (BNC) formed by heme A3 and copper B (CU(B)). The BNC reduces molecular oxygen to 2 water molecules using 4 electrons from cytochrome c in the IMS and 4 protons from the mitochondrial matrix. The sequence is that of Cytochrome c oxidase subunit 3 (COX3) from Allomyces macrogynus.